The following is a 318-amino-acid chain: Acetyl-coenzyme A carboxylase carboxyl transferase subunit alpha (318 aa).

A CoA carboxyltransferase C-terminal domain is found at 38–292 (KLEKRLAKLE…NKTITKSLHA (255 aa)).

Belongs to the AccA family. Acetyl-CoA carboxylase is a heterohexamer composed of biotin carboxyl carrier protein (AccB), biotin carboxylase (AccC) and two subunits each of ACCase subunit alpha (AccA) and ACCase subunit beta (AccD).

It localises to the cytoplasm. It catalyses the reaction N(6)-carboxybiotinyl-L-lysyl-[protein] + acetyl-CoA = N(6)-biotinyl-L-lysyl-[protein] + malonyl-CoA. It functions in the pathway lipid metabolism; malonyl-CoA biosynthesis; malonyl-CoA from acetyl-CoA: step 1/1. Functionally, component of the acetyl coenzyme A carboxylase (ACC) complex. First, biotin carboxylase catalyzes the carboxylation of biotin on its carrier protein (BCCP) and then the CO(2) group is transferred by the carboxyltransferase to acetyl-CoA to form malonyl-CoA. The protein is Acetyl-coenzyme A carboxylase carboxyl transferase subunit alpha of Listeria welshimeri serovar 6b (strain ATCC 35897 / DSM 20650 / CCUG 15529 / CIP 8149 / NCTC 11857 / SLCC 5334 / V8).